Reading from the N-terminus, the 117-residue chain is Ig heavy chain V region G4 (117 aa).

A signal peptide spans 1-19 (MTHWLCFTLALVAVRGVLS). The tract at residues 20-49 (EIQLVESGGAIRKPGDSLRLSCKASGFTFS) is framework-1. A disulfide bridge links Cys41 with Cys115. Residues 50-54 (DTWMA) form a complementarity-determining-1 region. A framework-2 region spans residues 55 to 68 (WARQPPGKGLQWVG). Positions 69 to 85 (EINGNSETIRYAPEVKG) are complementarity-determining-2. The tract at residues 86–117 (RLTISRDNTQNLLFLQISSLKPEDTATYYCAR) is framework-3.

This chain is Ig heavy chain V region G4 (G4), found in Caiman crocodilus (Spectacled caiman).